The chain runs to 509 residues: MRKFSRYAFTSMATVTLLSSLTPAALASDTNHKPATSDINFEITQKSDAVKALKELPKSENVKNHYQDYSVTDVKTDKKGFTHYTLQPSVDGVHAPDKEVKVHADKSGKVVLINGDTDAKKVKPTNKVTLSKDEAADKAFNAVKIDKNKAKNLQDDVIKENKVEIDGDSNKYIYNIELITVTPEISHWKVKIDADTGAVVEKTNLVKEAAATGTGKGVLGDTKDININSIDGGFSLEDLTHQGKLSAYNFNDQTGQATLITNEDENFVKDDQRAGVDANYYAKQTYDYYKNTFGRESYDNHGSPIVSLTHVNHYGGQDNRNNAAWIGDKMIYGDGDGRTFTNLSGANDVVAHELTHGVTQETANLEYKDQSGALNESFSDVFGYFVDDEDFLMGEDVYTPGKEGDALRSMSNPEQFGQPSHMKDYVYTEKDNGGVHTNSGIPNKAAYNVIQAIGKSKSEQIYYRALTEYLTSNSNFKDCKDALYQAAKDLYDEQTAEQVYEAWNEVGVE.

The signal sequence occupies residues 1 to 27; it reads MRKFSRYAFTSMATVTLLSSLTPAALA. Residues 28-208 constitute a propeptide that is removed on maturation; it reads SDTNHKPATS…VVEKTNLVKE (181 aa). A Ca(2+)-binding site is contributed by aspartate 348. Residue histidine 352 coordinates Zn(2+). Residue glutamate 353 is part of the active site. Zn(2+) contacts are provided by histidine 356 and glutamate 376. Aspartate 387, glutamate 389, aspartate 390, leucine 392, glutamate 395, tyrosine 398, threonine 399, lysine 402, and aspartate 405 together coordinate Ca(2+). The Proton donor role is filled by histidine 436.

It belongs to the peptidase M4 family. As to quaternary structure, monomer. The cofactor is Ca(2+). Requires Zn(2+) as cofactor.

It catalyses the reaction Cleavage of insulin B chain with specificity similar to that of thermolysin, preferring hydrophobic P1' residues. Activates the glutamyl endopeptidase (EC 3.4.21.19) of Staphylococcus aureus.. Plays an essential role in immune evasion by helping bacteria to resist complement-mediated killing by neutrophils. Inhibits the deposition of host C3b on bacterial surfaces and the release of the chemoattractant C5a by cleaving the central complement protein C3. The cleavage site renders the C3b molecule vulnerable to proteolytic degradation by host regulators. Cleaves and inactivates host SERPINA1, which is an endogenous protease inhibitor essential for controlling neutrophil serine protease elastase. Also plays an essential role in the cleavage and subsequent activation of the serine protease SspA (glutamyl endopeptidase) which is involved in colonization and infection of human tissues. This Staphylococcus aureus protein is Zinc metalloproteinase aureolysin.